The chain runs to 481 residues: Cysteine--tRNA ligase (481 aa).

Residue Cys-29 coordinates Zn(2+). The 'HIGH' region signature appears at 31–41 (PTVYDYSHLGH). Zn(2+) contacts are provided by Cys-210, His-235, and Glu-239. Positions 272-276 (KMSKS) match the 'KMSKS' region motif. Lys-275 is an ATP binding site.

This sequence belongs to the class-I aminoacyl-tRNA synthetase family. In terms of assembly, monomer. Zn(2+) is required as a cofactor.

It is found in the cytoplasm. It catalyses the reaction tRNA(Cys) + L-cysteine + ATP = L-cysteinyl-tRNA(Cys) + AMP + diphosphate. This is Cysteine--tRNA ligase from Anaeromyxobacter dehalogenans (strain 2CP-C).